A 431-amino-acid chain; its full sequence is UDP-N-acetylglucosamine--N-acetylmuramyl-(pentapeptide) pyrophosphoryl-undecaprenol N-acetylglucosamine transferase (431 aa).

Residues 29–31 (TGG), Asn-141, Arg-177, Ser-205, Ile-258, and Gln-303 contribute to the UDP-N-acetyl-alpha-D-glucosamine site. The segment at 370–431 (AGSGDGQPPA…NPGASAGGAP (62 aa)) is disordered. Residues 395 to 420 (KQGSMQTSVNGDRSAQLIATNPQSRL) show a composition bias toward polar residues.

Belongs to the glycosyltransferase 28 family. MurG subfamily.

Its subcellular location is the cell inner membrane. The catalysed reaction is di-trans,octa-cis-undecaprenyl diphospho-N-acetyl-alpha-D-muramoyl-L-alanyl-D-glutamyl-meso-2,6-diaminopimeloyl-D-alanyl-D-alanine + UDP-N-acetyl-alpha-D-glucosamine = di-trans,octa-cis-undecaprenyl diphospho-[N-acetyl-alpha-D-glucosaminyl-(1-&gt;4)]-N-acetyl-alpha-D-muramoyl-L-alanyl-D-glutamyl-meso-2,6-diaminopimeloyl-D-alanyl-D-alanine + UDP + H(+). It functions in the pathway cell wall biogenesis; peptidoglycan biosynthesis. Its function is as follows. Cell wall formation. Catalyzes the transfer of a GlcNAc subunit on undecaprenyl-pyrophosphoryl-MurNAc-pentapeptide (lipid intermediate I) to form undecaprenyl-pyrophosphoryl-MurNAc-(pentapeptide)GlcNAc (lipid intermediate II). The chain is UDP-N-acetylglucosamine--N-acetylmuramyl-(pentapeptide) pyrophosphoryl-undecaprenol N-acetylglucosamine transferase from Xanthomonas euvesicatoria pv. vesicatoria (strain 85-10) (Xanthomonas campestris pv. vesicatoria).